The primary structure comprises 272 residues: Hemin import ATP-binding protein HmuV (272 aa).

Positions 2–255 constitute an ABC transporter domain; it reads LNADHLHVAR…EPIARCYGFR (254 aa). An ATP-binding site is contributed by 34-41; sequence GRNGAGKS.

This sequence belongs to the ABC transporter superfamily. Heme (hemin) importer (TC 3.A.1.14.5) family. As to quaternary structure, the complex is composed of two ATP-binding proteins (HmuV), two transmembrane proteins (HmuU) and a solute-binding protein (HmuT).

The protein resides in the cell inner membrane. Its function is as follows. Part of the ABC transporter complex HmuTUV involved in hemin import. Responsible for energy coupling to the transport system. The chain is Hemin import ATP-binding protein HmuV from Burkholderia pseudomallei (strain 1710b).